The chain runs to 331 residues: uncharacterized protein (331 aa).

G43 to S50 is an ATP binding site.

This is an uncharacterized protein from Methanocaldococcus jannaschii (strain ATCC 43067 / DSM 2661 / JAL-1 / JCM 10045 / NBRC 100440) (Methanococcus jannaschii).